The primary structure comprises 98 residues: NADH-ubiquinone oxidoreductase chain 4L (98 aa).

The next 3 helical transmembrane spans lie at 2–22, 29–49, and 61–81; these read PSISINITLAFTTALLGMLMF, SLLCLEGMMLSMFILSTLIIL, and ILLLVFAACEAAIGLALLVMI.

Belongs to the complex I subunit 4L family. As to quaternary structure, core subunit of respiratory chain NADH dehydrogenase (Complex I) which is composed of 45 different subunits.

It is found in the mitochondrion inner membrane. The enzyme catalyses a ubiquinone + NADH + 5 H(+)(in) = a ubiquinol + NAD(+) + 4 H(+)(out). Functionally, core subunit of the mitochondrial membrane respiratory chain NADH dehydrogenase (Complex I) which catalyzes electron transfer from NADH through the respiratory chain, using ubiquinone as an electron acceptor. Part of the enzyme membrane arm which is embedded in the lipid bilayer and involved in proton translocation. This is NADH-ubiquinone oxidoreductase chain 4L (MT-ND4L) from Mirza coquereli (Coquerel's giant mouse lemur).